The chain runs to 197 residues: Amino-terminal enhancer of split (197 aa).

Positions 1–15 (MMFPQSSSRHSGSSH) are enriched in low complexity. Disordered regions lie at residues 1-20 (MMFP…PQQL) and 169-197 (LGSQ…DKSD). Residues 166–197 (LSALGSQGHLPKEDKNGHEGDRRPDDDGDKSD) are CCN domain. Basic and acidic residues predominate over residues 175-197 (LPKEDKNGHEGDRRPDDDGDKSD).

It belongs to the WD repeat Groucho/TLE family. Monomer. Ubiquitinated by XIAP/BIRC4. Predominantly expressed in brain, testis and ovary. Ubiquitously expressed in the developing embryo. Present in unfertilized and fertilized eggs.

Its subcellular location is the nucleus. Functionally, may act as a transcriptional corepressor. Has a possible role in the negative regulation of proteins containing WD-40 repeats. May be required for the initiation and maintenance of the differentiated state. This chain is Amino-terminal enhancer of split (aes), found in Xenopus laevis (African clawed frog).